Consider the following 239-residue polypeptide: tRNA (guanine-N(1)-)-methyltransferase (239 aa).

S-adenosyl-L-methionine is bound by residues glycine 108 and 127–132; that span reads LGDYVL.

The protein belongs to the RNA methyltransferase TrmD family. In terms of assembly, homodimer.

Its subcellular location is the cytoplasm. The enzyme catalyses guanosine(37) in tRNA + S-adenosyl-L-methionine = N(1)-methylguanosine(37) in tRNA + S-adenosyl-L-homocysteine + H(+). Functionally, specifically methylates guanosine-37 in various tRNAs. In Streptococcus pneumoniae (strain JJA), this protein is tRNA (guanine-N(1)-)-methyltransferase.